A 430-amino-acid polypeptide reads, in one-letter code: Ribulose bisphosphate carboxylase (430 aa).

K160 acts as the Proton acceptor in catalysis. K162 contacts substrate. Mg(2+)-binding residues include K186, D188, and E189. N6-carboxylysine is present on K186. The active-site Proton acceptor is H278. Substrate-binding positions include R279, H311, 348–350 (SGG), and 370–373 (QAGG).

This sequence belongs to the RuBisCO large chain family. Type III subfamily. Homodimer or homodecamer. In contrast to form I RuBisCO, the form III RuBisCO is composed solely of large subunits. It depends on Mg(2+) as a cofactor.

The catalysed reaction is 2 (2R)-3-phosphoglycerate + 2 H(+) = D-ribulose 1,5-bisphosphate + CO2 + H2O. It carries out the reaction D-ribulose 1,5-bisphosphate + O2 = 2-phosphoglycolate + (2R)-3-phosphoglycerate + 2 H(+). Functionally, catalyzes the addition of molecular CO(2) and H(2)O to ribulose 1,5-bisphosphate (RuBP), generating two molecules of 3-phosphoglycerate (3-PGA). Functions in an archaeal AMP degradation pathway, together with AMP phosphorylase and R15P isomerase. The sequence is that of Ribulose bisphosphate carboxylase from Pyrococcus horikoshii (strain ATCC 700860 / DSM 12428 / JCM 9974 / NBRC 100139 / OT-3).